A 171-amino-acid polypeptide reads, in one-letter code: 3-hydroxydecanoyl-[acyl-carrier-protein] dehydratase (171 aa).

The active site involves His-70.

Belongs to the thioester dehydratase family. FabA subfamily. In terms of assembly, homodimer.

It localises to the cytoplasm. It carries out the reaction a (3R)-hydroxyacyl-[ACP] = a (2E)-enoyl-[ACP] + H2O. The catalysed reaction is (3R)-hydroxydecanoyl-[ACP] = (2E)-decenoyl-[ACP] + H2O. It catalyses the reaction (2E)-decenoyl-[ACP] = (3Z)-decenoyl-[ACP]. It participates in lipid metabolism; fatty acid biosynthesis. In terms of biological role, necessary for the introduction of cis unsaturation into fatty acids. Catalyzes the dehydration of (3R)-3-hydroxydecanoyl-ACP to E-(2)-decenoyl-ACP and then its isomerization to Z-(3)-decenoyl-ACP. Can catalyze the dehydratase reaction for beta-hydroxyacyl-ACPs with saturated chain lengths up to 16:0, being most active on intermediate chain length. This Methylococcus capsulatus (strain ATCC 33009 / NCIMB 11132 / Bath) protein is 3-hydroxydecanoyl-[acyl-carrier-protein] dehydratase.